The chain runs to 197 residues: Probable GTP-binding protein EngB (197 aa).

Residues 25-197 (SAPEIAFAGR…VRDEFFKFTR (173 aa)) enclose the EngB-type G domain. Residues 33–40 (GRSNVGKS), 60–64 (GCTRQ), 79–82 (DLPG), 146–149 (TKID), and 177–179 (ISI) contribute to the GTP site. Residues Ser-40 and Thr-62 each contribute to the Mg(2+) site.

It belongs to the TRAFAC class TrmE-Era-EngA-EngB-Septin-like GTPase superfamily. EngB GTPase family. Mg(2+) is required as a cofactor.

In terms of biological role, necessary for normal cell division and for the maintenance of normal septation. The polypeptide is Probable GTP-binding protein EngB (Wolbachia pipientis subsp. Culex pipiens (strain wPip)).